The primary structure comprises 305 residues: Heat stress transcription factor B-4d (305 aa).

The segment at 201–230 (LRRRNSLLLSELAHMRKLYNDIIYFLQNHV) is hydrophobic repeat HR-A/B. The short motif at 286 to 289 (KKRR) is the Nuclear localization signal element. The interval 286-305 (KKRRVQLVQEDEGDEQGSEG) is disordered. The segment covering 294-305 (QEDEGDEQGSEG) has biased composition (acidic residues).

This sequence belongs to the HSF family. Class B subfamily. As to quaternary structure, homotrimer. Exhibits temperature-dependent phosphorylation.

The protein resides in the nucleus. Transcriptional regulator that specifically binds DNA of heat shock promoter elements (HSE). In Oryza sativa subsp. japonica (Rice), this protein is Heat stress transcription factor B-4d (HSFB4D).